Reading from the N-terminus, the 159-residue chain is Cytochrome c-type biogenesis protein CcmE (159 aa).

Topologically, residues 1-8 (MHPIRKKR) are cytoplasmic. The helical; Signal-anchor for type II membrane protein transmembrane segment at 9–29 (LTIVLFLVAGIAIAVGLTTYA) threads the bilayer. The Periplasmic segment spans residues 30–159 (LRQNINLFYD…VEKAAETTAY (130 aa)). Heme-binding residues include histidine 124 and tyrosine 128. The interval 135–159 (EALERSSKGQHKSADVEKAAETTAY) is disordered. The span at 136–159 (ALERSSKGQHKSADVEKAAETTAY) shows a compositional bias: basic and acidic residues.

The protein belongs to the CcmE/CycJ family.

Its subcellular location is the cell inner membrane. In terms of biological role, heme chaperone required for the biogenesis of c-type cytochromes. Transiently binds heme delivered by CcmC and transfers the heme to apo-cytochromes in a process facilitated by CcmF and CcmH. This Marinobacter nauticus (strain ATCC 700491 / DSM 11845 / VT8) (Marinobacter aquaeolei) protein is Cytochrome c-type biogenesis protein CcmE.